Here is a 264-residue protein sequence, read N- to C-terminus: Small ribosomal subunit protein mS23 (264 aa).

The disordered stretch occupies residues 233–264 (ARTSNPAGSWKDDTTLNTAQEEESTTSENLHF).

This sequence belongs to the mitochondrion-specific ribosomal protein mS23 family. As to quaternary structure, component of the mitochondrial small ribosomal subunit. Mature mitochondrial ribosomes consist of a small (37S) and a large (54S) subunit. The 37S subunit contains at least 33 different proteins and 1 molecule of RNA (15S). The 54S subunit contains at least 45 different proteins and 1 molecule of RNA (21S).

It localises to the mitochondrion. The polypeptide is Small ribosomal subunit protein mS23 (RSM25) (Saccharomyces cerevisiae (strain YJM789) (Baker's yeast)).